A 306-amino-acid polypeptide reads, in one-letter code: RNA-binding protein Raly (306 aa).

Ser-2 is subject to N-acetylserine. Lys-4 participates in a covalent cross-link: Glycyl lysine isopeptide (Lys-Gly) (interchain with G-Cter in SUMO2). Residues Ser-21–Glu-92 form the RRM domain. At Lys-44 the chain carries N6-acetyllysine. Position 63 is a phosphoserine (Ser-63). Glycyl lysine isopeptide (Lys-Gly) (interchain with G-Cter in SUMO2) cross-links involve residues Lys-94 and Lys-99. 2 positions are modified to phosphoserine: Ser-106 and Ser-135. A Glycyl lysine isopeptide (Lys-Gly) (interchain with G-Cter in SUMO2) cross-link involves residue Lys-159. N6-acetyllysine; alternate is present on Lys-165. Lys-165 is covalently cross-linked (Glycyl lysine isopeptide (Lys-Gly) (interchain with G-Cter in SUMO2); alternate). Glycyl lysine isopeptide (Lys-Gly) (interchain with G-Cter in SUMO2) cross-links involve residues Lys-179 and Lys-191. A coiled-coil region spans residues Lys-183 to Lys-216. The disordered stretch occupies residues Gln-215–Gln-306. Residues Ala-217–Asp-226 show a composition bias toward basic and acidic residues. The segment covering Gly-227–Ser-252 has biased composition (gly residues). Positions Gly-227 to Ser-253 are epitope (recognized by BKRF1 antibodies). At Thr-262 the chain carries Phosphothreonine. The residue at position 264 (Ser-264) is a Phosphoserine. Thr-286 carries the post-translational modification Phosphothreonine. Residues His-287–Asp-297 show a composition bias toward basic and acidic residues. 2 positions are modified to phosphoserine: Ser-288 and Ser-295. Thr-298 carries the phosphothreonine modification.

It belongs to the RRM HNRPC family. RALY subfamily. In terms of assembly, identified in the spliceosome C complex. Interacts (through its RNA-binding domain) with FUS (through its RNA-binding domain); both are components of the same RNPs. Expressed in heart, brain, lung, liver, skeletal muscle, kidney and pancreas. Weakly expressed in placenta.

The protein localises to the nucleus. Functionally, RNA-binding protein that acts as a transcriptional cofactor for cholesterol biosynthetic genes in the liver. Binds the lipid-responsive non-coding RNA LeXis and is required for LeXis-mediated effect on cholesterogenesis. May be a heterogeneous nuclear ribonucleoprotein (hnRNP). This chain is RNA-binding protein Raly (RALY), found in Homo sapiens (Human).